The sequence spans 416 residues: Formyl-CoA:oxalate CoA-transferase (416 aa).

Residues 17–18, Arg38, 72–75, 96–98, His104, and 137–140 each bind CoA; these read QS, LNTK, NFH, and KAYE. Asp169 (nucleophile) is an active-site residue. 248-250 provides a ligand contact to substrate; it reads GGQ. Residue 273 to 275 participates in CoA binding; it reads QEQ.

The protein belongs to the CoA-transferase III family. Frc subfamily. Homodimer.

It carries out the reaction formyl-CoA + oxalate = oxalyl-CoA + formate. It functions in the pathway metabolic intermediate degradation; oxalate degradation; CO(2) and formate from oxalate: step 1/2. Functionally, involved in the catabolism of oxalate and in the adapatation to low pH via the induction of the oxalate-dependent acid tolerance response (ATR). Catalyzes the transfer of the CoA moiety from formyl-CoA to oxalate. The polypeptide is Formyl-CoA:oxalate CoA-transferase (Shigella boydii serotype 18 (strain CDC 3083-94 / BS512)).